A 174-amino-acid polypeptide reads, in one-letter code: NADH-quinone oxidoreductase subunit B 2 (174 aa).

[4Fe-4S] cluster-binding residues include C38, C39, C104, and C133.

This sequence belongs to the complex I 20 kDa subunit family. As to quaternary structure, NDH-1 is composed of 14 different subunits. Subunits NuoB, C, D, E, F, and G constitute the peripheral sector of the complex. The cofactor is [4Fe-4S] cluster.

The protein resides in the cell membrane. The enzyme catalyses a quinone + NADH + 5 H(+)(in) = a quinol + NAD(+) + 4 H(+)(out). In terms of biological role, NDH-1 shuttles electrons from NADH, via FMN and iron-sulfur (Fe-S) centers, to quinones in the respiratory chain. The immediate electron acceptor for the enzyme in this species is believed to be ubiquinone. Couples the redox reaction to proton translocation (for every two electrons transferred, four hydrogen ions are translocated across the cytoplasmic membrane), and thus conserves the redox energy in a proton gradient. The protein is NADH-quinone oxidoreductase subunit B 2 of Chloroflexus aurantiacus (strain ATCC 29366 / DSM 635 / J-10-fl).